A 363-amino-acid chain; its full sequence is Phosphoserine aminotransferase (363 aa).

Residue arginine 42 participates in L-glutamate binding. Pyridoxal 5'-phosphate contacts are provided by residues 76–77 (GR), tryptophan 102, threonine 156, aspartate 175, and glutamine 198. Position 199 is an N6-(pyridoxal phosphate)lysine (lysine 199). 240–241 (NT) is a binding site for pyridoxal 5'-phosphate.

Belongs to the class-V pyridoxal-phosphate-dependent aminotransferase family. SerC subfamily. As to quaternary structure, homodimer. The cofactor is pyridoxal 5'-phosphate.

Its subcellular location is the cytoplasm. It carries out the reaction O-phospho-L-serine + 2-oxoglutarate = 3-phosphooxypyruvate + L-glutamate. The catalysed reaction is 4-(phosphooxy)-L-threonine + 2-oxoglutarate = (R)-3-hydroxy-2-oxo-4-phosphooxybutanoate + L-glutamate. It functions in the pathway amino-acid biosynthesis; L-serine biosynthesis; L-serine from 3-phospho-D-glycerate: step 2/3. The protein operates within cofactor biosynthesis; pyridoxine 5'-phosphate biosynthesis; pyridoxine 5'-phosphate from D-erythrose 4-phosphate: step 3/5. Catalyzes the reversible conversion of 3-phosphohydroxypyruvate to phosphoserine and of 3-hydroxy-2-oxo-4-phosphonooxybutanoate to phosphohydroxythreonine. This is Phosphoserine aminotransferase from Shewanella sp. (strain ANA-3).